The sequence spans 163 residues: Nucleotide-binding protein PM1656 (163 aa).

Belongs to the YajQ family.

In terms of biological role, nucleotide-binding protein. The protein is Nucleotide-binding protein PM1656 of Pasteurella multocida (strain Pm70).